The chain runs to 156 residues: Phosphopantetheine adenylyltransferase (156 aa).

Thr-10 contacts substrate. ATP contacts are provided by residues 10–11 (TF) and His-18. Lys-42, Leu-74, and Arg-88 together coordinate substrate. Residues 89–91 (GIR), Glu-99, and 124–130 (WAFISSS) contribute to the ATP site.

Belongs to the bacterial CoaD family. In terms of assembly, homohexamer. It depends on Mg(2+) as a cofactor.

It is found in the cytoplasm. The catalysed reaction is (R)-4'-phosphopantetheine + ATP + H(+) = 3'-dephospho-CoA + diphosphate. Its pathway is cofactor biosynthesis; coenzyme A biosynthesis; CoA from (R)-pantothenate: step 4/5. Functionally, reversibly transfers an adenylyl group from ATP to 4'-phosphopantetheine, yielding dephospho-CoA (dPCoA) and pyrophosphate. In Hamiltonella defensa subsp. Acyrthosiphon pisum (strain 5AT), this protein is Phosphopantetheine adenylyltransferase.